A 187-amino-acid chain; its full sequence is 5-hmdU DNA kinase (187 aa).

The protein belongs to the thymidylate kinase family. 5-hmdU DNA kinase subfamily.

It catalyses the reaction 5-hydroxymethyl-dUMP in DNA + ATP = 5-phosphomethyl-dUMP in DNA + ADP + H(+). Its function is as follows. Phosphorylates 5-hydroxymethyluracil (5hmdU) into 5-phosphomethyl-2'-deoxyuridine (5-PmdU) on DNA as a step in the pathway leading to thymidine hypermodifications in the viral genome. The phosphate is added internally to the DNA polymer. Also transfers glutamate to 5-pyrophosphoryloxymethyldeoxyuridine (5-PPmdU) to produce 5-Nalpha-glyutamylthymidine (Nalpha-GluT). As a final result of the pathway of hypermodification, 5-aminoethyl-2'-deoxyuridine (5-NedU) substitutes for about 30% of thymidines in the viral DNA. These modifications probably prevent degradation of viral genome by the host restriction-modification antiviral defense system. The protein is 5-hmdU DNA kinase of Pseudomonas phage M6.